Here is a 455-residue protein sequence, read N- to C-terminus: Major facilitator superfamily domain-containing protein 10 (455 aa).

Helical transmembrane passes span 27-47 (VVFLGLLLDLLAFTLLLPLLP), 86-106 (VLFGGLIGSAFSVLQFLCAPL), 113-135 (CLGRRPVMLLCLMGVATSYAVWA), 148-168 (LIGGISKGNVSLSTAIVADLG), 176-196 (GMAVIGVAFSLGFTLGPMLGA), 202-222 (MAPWFALLFAASDLLFIFCFL), 275-295 (LGLVYFLYLFLFSGLEYTLSF), 310-327 (KMFFLIGLTMATIQGAYA), 336-356 (VAAVKRALLLLVPAFLLIGWG), 359-379 (LPVLGLGLLLYSFAAAVVVPC), and 421-441 (LAGAQACFTTWSGLFLLPFFL).

It belongs to the major facilitator superfamily. In terms of tissue distribution, expressed in luminal membrane of renal tubules (at protein level). Detected in all tissues tested with higher expression in heart, splee, kidney, leukocytes and prostate.

Its subcellular location is the nucleus inner membrane. The protein resides in the cell membrane. Probable organic anion transporter which may serve as a transporter for some non-steroidal anti-inflammatory drugs (NSAIDs) as well as other organic anions across the luminal membranes of renal proximal tubules at the final excretion step into the urine. The sequence is that of Major facilitator superfamily domain-containing protein 10 (MFSD10) from Homo sapiens (Human).